A 486-amino-acid polypeptide reads, in one-letter code: ATP-dependent rRNA helicase RRP3 (486 aa).

The tract at residues 1–58 (MNGAKRRKVAQDTPRNTKPVAQEKPARAEPKPSSDEESEEESATLEEPSAEETAVDAP) is disordered. Basic and acidic residues predominate over residues 24-34 (KPARAEPKPSS). Residues 35-54 (DEESEEESATLEEPSAEETA) are compositionally biased toward acidic residues. The short motif at 60–88 (KTFKDLGVNDALCEACEKLNYKYPTPIQE) is the Q motif element. The Helicase ATP-binding domain occupies 91–262 (IPVALQGRDI…RASLRDPVKV (172 aa)). 104 to 111 (AETGSGKT) is a binding site for ATP. The DEAD box signature appears at 210–213 (DEAD). Positions 286-434 (QKDVHLIYLI…EYPTEKEEVM (149 aa)) constitute a Helicase C-terminal domain. Composition is skewed to basic and acidic residues over residues 451–460 (MKSFTEERGK) and 476–486 (RGRDDMDREEG). The disordered stretch occupies residues 451–486 (MKSFTEERGKKGSTLKGGRGKKGGKRGRDDMDREEG).

It belongs to the DEAD box helicase family. DDX47/RRP3 subfamily. As to quaternary structure, interacts with the SSU processome.

The protein localises to the nucleus. The enzyme catalyses ATP + H2O = ADP + phosphate + H(+). Functionally, ATP-dependent rRNA helicase required for pre-ribosomal RNA processing. Involved in the maturation of the 35S-pre-rRNA and to its cleavage to mature 18S rRNA. The protein is ATP-dependent rRNA helicase RRP3 of Gibberella zeae (strain ATCC MYA-4620 / CBS 123657 / FGSC 9075 / NRRL 31084 / PH-1) (Wheat head blight fungus).